We begin with the raw amino-acid sequence, 122 residues long: MNSYNKQIGNIGEAVAENYLIQNGYIILDRNFSCRVGEIDIIGKDGDIISFLEVKSRYGNLYGSPGESVNFAKQYKIYKTAQLYILKKKLNRFYFRFDVIEIIFNNYNDDYSIRLIKDAFQL.

Belongs to the UPF0102 family.

The protein is UPF0102 protein CTC_01256 of Clostridium tetani (strain Massachusetts / E88).